The sequence spans 341 residues: 4-hydroxythreonine-4-phosphate dehydrogenase (341 aa).

Substrate is bound at residue Thr-126. Residues His-161, His-206, and His-272 each coordinate a divalent metal cation. Lys-280, Asn-289, and Arg-298 together coordinate substrate.

It belongs to the PdxA family. As to quaternary structure, homodimer. A divalent metal cation serves as cofactor.

Its subcellular location is the cytoplasm. It catalyses the reaction 4-(phosphooxy)-L-threonine + NAD(+) = 3-amino-2-oxopropyl phosphate + CO2 + NADH. The protein operates within cofactor biosynthesis; pyridoxine 5'-phosphate biosynthesis; pyridoxine 5'-phosphate from D-erythrose 4-phosphate: step 4/5. Functionally, catalyzes the NAD(P)-dependent oxidation of 4-(phosphooxy)-L-threonine (HTP) into 2-amino-3-oxo-4-(phosphooxy)butyric acid which spontaneously decarboxylates to form 3-amino-2-oxopropyl phosphate (AHAP). The chain is 4-hydroxythreonine-4-phosphate dehydrogenase from Thermosynechococcus vestitus (strain NIES-2133 / IAM M-273 / BP-1).